Reading from the N-terminus, the 287-residue chain is uncharacterized protein (287 aa).

The next 2 helical transmembrane spans lie at 12–32 and 217–237; these read IILL…GAAL and YTIG…VLIV.

Its subcellular location is the cell membrane. This is an uncharacterized protein from Mycoplasma pneumoniae (strain ATCC 29342 / M129 / Subtype 1) (Mycoplasmoides pneumoniae).